A 274-amino-acid chain; its full sequence is ATP synthase subunit delta (274 aa).

This sequence belongs to the ATPase delta chain family. In terms of assembly, F-type ATPases have 2 components, F(1) - the catalytic core - and F(0) - the membrane proton channel. F(1) has five subunits: alpha(3), beta(3), gamma(1), delta(1), epsilon(1). F(0) has three main subunits: a(1), b(2) and c(10-14). The alpha and beta chains form an alternating ring which encloses part of the gamma chain. F(1) is attached to F(0) by a central stalk formed by the gamma and epsilon chains, while a peripheral stalk is formed by the delta and b chains.

The protein resides in the cell membrane. In terms of biological role, f(1)F(0) ATP synthase produces ATP from ADP in the presence of a proton or sodium gradient. F-type ATPases consist of two structural domains, F(1) containing the extramembraneous catalytic core and F(0) containing the membrane proton channel, linked together by a central stalk and a peripheral stalk. During catalysis, ATP synthesis in the catalytic domain of F(1) is coupled via a rotary mechanism of the central stalk subunits to proton translocation. Functionally, this protein is part of the stalk that links CF(0) to CF(1). It either transmits conformational changes from CF(0) to CF(1) or is implicated in proton conduction. This chain is ATP synthase subunit delta, found in Salinispora tropica (strain ATCC BAA-916 / DSM 44818 / JCM 13857 / NBRC 105044 / CNB-440).